The sequence spans 106 residues: NADH dehydrogenase [ubiquinone] iron-sulfur protein 5 (106 aa).

Positions 30 to 74 constitute a CHCH domain; it reads APRCHAFEKEWIECAHGIGAIRAEKECKIEYDDFIECLLRQKTMR. 2 short sequence motifs (cx9C motif) span residues 33-43 and 56-66; these read CHAFEKEWIEC and CKIEYDDFIEC. 2 disulfides stabilise this stretch: C33–C66 and C43–C56. Positions 87-106 are disordered; it reads IKEGKYTPPPHHIGKGEPRP.

The protein belongs to the complex I NDUFS5 subunit family. In terms of assembly, mammalian complex I is composed of 45 different subunits. This is a component of the iron-sulfur (IP) fragment of the enzyme.

It is found in the mitochondrion inner membrane. Its subcellular location is the mitochondrion intermembrane space. Functionally, accessory subunit of the mitochondrial membrane respiratory chain NADH dehydrogenase (Complex I), that is believed not to be involved in catalysis. Complex I functions in the transfer of electrons from NADH to the respiratory chain. The immediate electron acceptor for the enzyme is believed to be ubiquinone. The protein is NADH dehydrogenase [ubiquinone] iron-sulfur protein 5 (NDUFS5) of Macaca fascicularis (Crab-eating macaque).